Reading from the N-terminus, the 713-residue chain is Polyribonucleotide nucleotidyltransferase (713 aa).

Residues Asp491 and Asp497 each contribute to the Mg(2+) site. The KH domain maps to 558–617; it reads PRMITIKINPEKIRDVIGKGGSVIRALTEETGTTIDISDDGVVTIASTSSDGMAEAKKRI. Residues 627 to 695 enclose the S1 motif domain; that stretch reads GQVYEGTVLK…EKGRVRLSAK (69 aa).

It belongs to the polyribonucleotide nucleotidyltransferase family. Mg(2+) serves as cofactor.

It localises to the cytoplasm. It catalyses the reaction RNA(n+1) + phosphate = RNA(n) + a ribonucleoside 5'-diphosphate. Functionally, involved in mRNA degradation. Catalyzes the phosphorolysis of single-stranded polyribonucleotides processively in the 3'- to 5'-direction. In Burkholderia cenocepacia (strain ATCC BAA-245 / DSM 16553 / LMG 16656 / NCTC 13227 / J2315 / CF5610) (Burkholderia cepacia (strain J2315)), this protein is Polyribonucleotide nucleotidyltransferase.